A 149-amino-acid polypeptide reads, in one-letter code: Protein TraJ (149 aa).

It is found in the cell membrane. Its function is as follows. This protein is essential for positively regulating the expression of transfer genes that are involved in the conjugal transfer of DNA between bacterial cells. This is Protein TraJ (traJ) from Escherichia coli.